Reading from the N-terminus, the 182-residue chain is Homeobox protein pnx (182 aa).

An important for interaction with tle3a region spans residues 1–34; the sequence is MHEETSNSTLQGKTSFSIADILDPAKFNGTRETR. The tract at residues 24-63 is disordered; that stretch reads PAKFNGTRETREISNNRESPKTTSPTQDPSAPNIANASAA. Residues 29-43 are compositionally biased toward basic and acidic residues; that stretch reads GTRETREISNNRESP. A compositionally biased stretch (low complexity) spans 52–63; sequence PSAPNIANASAA. The segment at residues 67–126 is a DNA-binding region (homeobox); it reads SKRIRTAFTLDQLRILERSFQSSHYLSVFERHCIASALGLSETQVKIWFQNRRTKWKKEL.

The protein belongs to the NK-1 homeobox family. Interacts with tle3a.

The protein localises to the nucleus. Transcriptional repressor. Activity as a repressor is enhanced by binding to the corepressor tle3a. In Danio rerio (Zebrafish), this protein is Homeobox protein pnx.